We begin with the raw amino-acid sequence, 117 residues long: Ribosome-binding factor A (117 aa).

The protein belongs to the RbfA family. In terms of assembly, monomer. Binds 30S ribosomal subunits, but not 50S ribosomal subunits or 70S ribosomes.

It localises to the cytoplasm. Functionally, one of several proteins that assist in the late maturation steps of the functional core of the 30S ribosomal subunit. Associates with free 30S ribosomal subunits (but not with 30S subunits that are part of 70S ribosomes or polysomes). Required for efficient processing of 16S rRNA. May interact with the 5'-terminal helix region of 16S rRNA. This chain is Ribosome-binding factor A, found in Leptospira interrogans serogroup Icterohaemorrhagiae serovar copenhageni (strain Fiocruz L1-130).